A 435-amino-acid polypeptide reads, in one-letter code: NADH-quinone oxidoreductase subunit D 2 (435 aa).

Belongs to the complex I 49 kDa subunit family. NDH-1 is composed of 14 different subunits. Subunits NuoB, C, D, E, F, and G constitute the peripheral sector of the complex.

It localises to the cell inner membrane. The enzyme catalyses a quinone + NADH + 5 H(+)(in) = a quinol + NAD(+) + 4 H(+)(out). In terms of biological role, NDH-1 shuttles electrons from NADH, via FMN and iron-sulfur (Fe-S) centers, to quinones in the respiratory chain. The immediate electron acceptor for the enzyme in this species is believed to be ubiquinone. Couples the redox reaction to proton translocation (for every two electrons transferred, four hydrogen ions are translocated across the cytoplasmic membrane), and thus conserves the redox energy in a proton gradient. The polypeptide is NADH-quinone oxidoreductase subunit D 2 (Stenotrophomonas maltophilia (strain R551-3)).